The primary structure comprises 78 residues: Antitoxin VapB1 (78 aa).

Residues 3–44 (TKVFQSGNSQAVRIPMDFRFDVDTVEIFRKENGDVVLRPVSK) enclose the SpoVT-AbrB domain.

This sequence belongs to the VapB family. In terms of assembly, forms multimers, as well forming as a complex with VapC1.

Antitoxin component of a type II toxin-antitoxin (TA) system. Upon expression in E.coli neutralizes the effect of toxin VapC1. In vitro inhibits the RNase activity of VapC1. In Haemophilus influenzae (strain R2866), this protein is Antitoxin VapB1 (vapB1).